The sequence spans 535 residues: Arylsulfatase G (535 aa).

The signal sequence occupies residues 1–18 (MGWLFLKVLFLGVTFLGC). Positions 44, 45, and 84 each coordinate Ca(2+). The Nucleophile role is filled by C84. C84 carries the 3-oxoalanine (Cys) modification. The N-linked (GlcNAc...) asparagine glycan is linked to N117. K137 contributes to the substrate binding site. The active site involves H139. Residue S162 participates in substrate binding. Residue N215 is glycosylated (N-linked (GlcNAc...) asparagine). Substrate is bound at residue H251. Residues D302 and N303 each coordinate Ca(2+). N-linked (GlcNAc...) asparagine glycosylation is found at N356 and N497.

Belongs to the sulfatase family. The cofactor is Ca(2+). In terms of processing, N-glycosylated with both high mannose and complex type sugars. The conversion to 3-oxoalanine (also known as C-formylglycine, FGly), of a serine or cysteine residue in prokaryotes and of a cysteine residue in eukaryotes, is critical for catalytic activity. Post-translationally, the 63-kDa precursor undergoes proteolytic processing in two steps, yielding two fragments in the first step (apparent molecular masses of 44 and 18 kDa). In the second step, the 44-kDa fragment is processed further to the 34- and 10-kDa chains. The 10-kDa chain is a cleavage product of the 44-kDa fragment but linked to the 18-kDa chain through a disulfide bridge.

The protein localises to the lysosome. It catalyses the reaction an aryl sulfate + H2O = a phenol + sulfate + H(+). It carries out the reaction Hydrolysis of the 3-sulfate groups of the N-sulfo-D-glucosamine 3-O-sulfate units of heparin.. Functionally, displays arylsulfatase activity with pseudosubstrates at acidic pH, such as p-nitrocatechol sulfate. Catalyzes the hydrolysis of the 3-sulfate groups of the N-sulfo-D-glucosamine 3-O-sulfate units of heparin. This chain is Arylsulfatase G (ARSG), found in Canis lupus familiaris (Dog).